Reading from the N-terminus, the 238-residue chain is Orotidine 5'-phosphate decarboxylase (238 aa).

Substrate-binding positions include Asp10, Lys32, 59–68, Thr122, Arg184, Gln193, Gly213, and Arg214; that span reads DLKLHDIPNT. Residue Lys61 is the Proton donor of the active site.

Belongs to the OMP decarboxylase family. Type 1 subfamily. As to quaternary structure, homodimer.

It catalyses the reaction orotidine 5'-phosphate + H(+) = UMP + CO2. The protein operates within pyrimidine metabolism; UMP biosynthesis via de novo pathway; UMP from orotate: step 2/2. Functionally, catalyzes the decarboxylation of orotidine 5'-monophosphate (OMP) to uridine 5'-monophosphate (UMP). This Bacillus cereus (strain ATCC 10987 / NRS 248) protein is Orotidine 5'-phosphate decarboxylase.